The following is a 288-amino-acid chain: UDP-3-O-acyl-N-acetylglucosamine deacetylase (288 aa).

Zn(2+)-binding residues include His79, His236, and Asp240. His263 (proton donor) is an active-site residue.

This sequence belongs to the LpxC family. It depends on Zn(2+) as a cofactor.

It carries out the reaction a UDP-3-O-[(3R)-3-hydroxyacyl]-N-acetyl-alpha-D-glucosamine + H2O = a UDP-3-O-[(3R)-3-hydroxyacyl]-alpha-D-glucosamine + acetate. It participates in glycolipid biosynthesis; lipid IV(A) biosynthesis; lipid IV(A) from (3R)-3-hydroxytetradecanoyl-[acyl-carrier-protein] and UDP-N-acetyl-alpha-D-glucosamine: step 2/6. In terms of biological role, catalyzes the hydrolysis of UDP-3-O-myristoyl-N-acetylglucosamine to form UDP-3-O-myristoylglucosamine and acetate, the committed step in lipid A biosynthesis. This Rickettsia felis (strain ATCC VR-1525 / URRWXCal2) (Rickettsia azadi) protein is UDP-3-O-acyl-N-acetylglucosamine deacetylase.